We begin with the raw amino-acid sequence, 430 residues long: Adenylosuccinate synthetase (430 aa).

GTP-binding positions include glycine 13 to lysine 19 and glycine 41 to threonine 43. The active-site Proton acceptor is aspartate 14. Mg(2+) is bound by residues aspartate 14 and glycine 41. Residues aspartate 14–lysine 17, asparagine 39–histidine 42, threonine 130, arginine 144, glutamine 225, threonine 240, and arginine 304 contribute to the IMP site. Histidine 42 serves as the catalytic Proton donor. Alanine 300–arginine 306 provides a ligand contact to substrate. GTP-binding positions include arginine 306, lysine 332–aspartate 334, and serine 414–glycine 416.

It belongs to the adenylosuccinate synthetase family. In terms of assembly, homodimer. Requires Mg(2+) as cofactor.

Its subcellular location is the cytoplasm. It catalyses the reaction IMP + L-aspartate + GTP = N(6)-(1,2-dicarboxyethyl)-AMP + GDP + phosphate + 2 H(+). The protein operates within purine metabolism; AMP biosynthesis via de novo pathway; AMP from IMP: step 1/2. In terms of biological role, plays an important role in the de novo pathway of purine nucleotide biosynthesis. Catalyzes the first committed step in the biosynthesis of AMP from IMP. This Pseudomonas syringae pv. tomato (strain ATCC BAA-871 / DC3000) protein is Adenylosuccinate synthetase.